The following is a 191-amino-acid chain: MYVVLEGVDGAGKSTQVELLKDRFKNALFTKEPGGTRMGESLRRIALNENISELARAFLFLSDRAEHTESVIKPALKEKKLIISDRSLISGMAYSQFSSLELNLLATQSVLPAKIILLLIDKEGLKQRLSLKSLDKIENQGIEKLLHIQQKLKTHAYALQEKFGCEVLELDAKESVKNLHEKIAAFIKCAV.

7–14 provides a ligand contact to ATP; sequence GVDGAGKS.

It belongs to the thymidylate kinase family.

It carries out the reaction dTMP + ATP = dTDP + ADP. In terms of biological role, phosphorylation of dTMP to form dTDP in both de novo and salvage pathways of dTTP synthesis. In Helicobacter pylori (strain ATCC 700392 / 26695) (Campylobacter pylori), this protein is Thymidylate kinase (tmk).